We begin with the raw amino-acid sequence, 95 residues long: Co-chaperonin GroES (95 aa).

Belongs to the GroES chaperonin family. In terms of assembly, heptamer of 7 subunits arranged in a ring. Interacts with the chaperonin GroEL.

The protein resides in the cytoplasm. Functionally, together with the chaperonin GroEL, plays an essential role in assisting protein folding. The GroEL-GroES system forms a nano-cage that allows encapsulation of the non-native substrate proteins and provides a physical environment optimized to promote and accelerate protein folding. GroES binds to the apical surface of the GroEL ring, thereby capping the opening of the GroEL channel. This is Co-chaperonin GroES from Rickettsia typhi (strain ATCC VR-144 / Wilmington).